Consider the following 134-residue polypeptide: Small ribosomal subunit protein uS11 (134 aa).

It belongs to the universal ribosomal protein uS11 family. Part of the 30S ribosomal subunit. Interacts with proteins S7 and S18. Binds to IF-3.

In terms of biological role, located on the platform of the 30S subunit, it bridges several disparate RNA helices of the 16S rRNA. Forms part of the Shine-Dalgarno cleft in the 70S ribosome. This chain is Small ribosomal subunit protein uS11, found in Polaromonas sp. (strain JS666 / ATCC BAA-500).